A 696-amino-acid chain; its full sequence is SEC14 domain and spectrin repeat-containing protein 1 (696 aa).

A CRAL-TRIO domain is found at 1–153 (MEASVILPIL…DFGGSLTYDH (153 aa)). 3 Spectrin repeats span residues 275–378 (EEIQ…NLLQ), 381–494 (LEFH…LKML), and 500–602 (FKCE…HRLE).

Belongs to the SOLO family. Interacts (via the spectrin 1 repeat) with TRPC4 and TRPC5 (via CIRB domain). Interacts with CTNNB1.

Its function is as follows. May act as the primary docking protein directing membrane turnover and assembly of the transient receptor potential channels TRPC4 and TRPC5. Binds phospholipids such as phosphatidylinositol monophosphates, phosphatidylinositol diphosphates (PIP2s) and phosphatidic acid, but not less polar lipids including phosphatidylcholine, phosphatidylserine, and phosphatidylinositol. The binding to PIP2s is calcium dependent. Might be involved in the plasma membrane localization of CTNNB1. This Mus musculus (Mouse) protein is SEC14 domain and spectrin repeat-containing protein 1 (Sestd1).